The following is a 199-amino-acid chain: NAD(P)H dehydrogenase (quinone) (199 aa).

A Flavodoxin-like domain is found at 4 to 190 (VLVLYYSTYG…AGARHQGELV (187 aa)). FMN contacts are provided by residues 10-15 (STYGHL) and 78-80 (TRF). Residue Tyr12 participates in NAD(+) binding. Trp98 is a binding site for substrate. FMN-binding positions include 113–119 (STATQHG) and His134.

It belongs to the WrbA family. Requires FMN as cofactor.

The enzyme catalyses a quinone + NADH + H(+) = a quinol + NAD(+). The catalysed reaction is a quinone + NADPH + H(+) = a quinol + NADP(+). This chain is NAD(P)H dehydrogenase (quinone), found in Azorhizobium caulinodans (strain ATCC 43989 / DSM 5975 / JCM 20966 / LMG 6465 / NBRC 14845 / NCIMB 13405 / ORS 571).